We begin with the raw amino-acid sequence, 238 residues long: Phosphatidylcholine synthase (238 aa).

Residues methionine 1–tryptophan 16 are Cytoplasmic-facing. The chain crosses the membrane as a helical span at residues glycine 17–valine 37. Topologically, residues aspartate 38 to proline 41 are periplasmic. The chain crosses the membrane as a helical span at residues glutamine 42–alanine 62. Residues arginine 63–aspartate 75 are Cytoplasmic-facing. Residues glycine 76–isoleucine 96 traverse the membrane as a helical segment. At tyrosine 97 to glutamate 104 the chain is on the periplasmic side. Residues histidine 105–valine 125 form a helical membrane-spanning segment. Residues asparagine 126–asparagine 132 lie on the Cytoplasmic side of the membrane. The helical transmembrane segment at tyrosine 133 to leucine 153 threads the bilayer. The Periplasmic segment spans residues histidine 154–proline 155. Residues tryptophan 156 to leucine 176 traverse the membrane as a helical segment. The Cytoplasmic portion of the chain corresponds to histidine 177 to glutamine 183. Residues phenylalanine 184–valine 204 traverse the membrane as a helical segment. Residues glutamine 205–aspartate 209 lie on the Periplasmic side of the membrane. A helical transmembrane segment spans residues leucine 210–tryptophan 230. Over arginine 231 to glycine 238 the chain is Cytoplasmic.

Belongs to the CDP-alcohol phosphatidyltransferase class-I family. The cofactor is Mn(2+).

The protein resides in the cell inner membrane. The catalysed reaction is a CDP-1,2-diacyl-sn-glycerol + choline = a 1,2-diacyl-sn-glycero-3-phosphocholine + CMP + H(+). Its function is as follows. Condenses choline with CDP-diglyceride to produce phosphatidylcholine and CMP. The polypeptide is Phosphatidylcholine synthase (Pseudomonas aeruginosa (strain ATCC 15692 / DSM 22644 / CIP 104116 / JCM 14847 / LMG 12228 / 1C / PRS 101 / PAO1)).